The sequence spans 329 residues: Probable fructokinase-2 (329 aa).

This sequence belongs to the carbohydrate kinase PfkB family.

It catalyses the reaction D-fructose + ATP = D-fructose 6-phosphate + ADP + H(+). The protein operates within glycan biosynthesis; starch biosynthesis. May play an important role in maintaining the flux of carbon towards starch formation. This Arabidopsis thaliana (Mouse-ear cress) protein is Probable fructokinase-2.